Here is a 55-residue protein sequence, read N- to C-terminus: MAKDKDVRPIIKLKSTAGTGFTYVTRKNRRNNPDRITLKKYDPVVRKHVDFREER.

This sequence belongs to the bacterial ribosomal protein bL33 family.

The polypeptide is Large ribosomal subunit protein bL33 (Micrococcus luteus (strain ATCC 4698 / DSM 20030 / JCM 1464 / CCM 169 / CCUG 5858 / IAM 1056 / NBRC 3333 / NCIMB 9278 / NCTC 2665 / VKM Ac-2230) (Micrococcus lysodeikticus)).